The sequence spans 226 residues: Nucleoside triphosphate pyrophosphatase (226 aa).

Asp-79 acts as the Proton acceptor in catalysis. The tract at residues 204-226 is disordered; sequence WSRGTSTHPTPGTSATPKPNPGA. Polar residues predominate over residues 206-220; that stretch reads RGTSTHPTPGTSATP.

The protein belongs to the Maf family. It depends on a divalent metal cation as a cofactor.

It localises to the cytoplasm. The catalysed reaction is a ribonucleoside 5'-triphosphate + H2O = a ribonucleoside 5'-phosphate + diphosphate + H(+). The enzyme catalyses a 2'-deoxyribonucleoside 5'-triphosphate + H2O = a 2'-deoxyribonucleoside 5'-phosphate + diphosphate + H(+). Its function is as follows. Nucleoside triphosphate pyrophosphatase. May have a dual role in cell division arrest and in preventing the incorporation of modified nucleotides into cellular nucleic acids. The chain is Nucleoside triphosphate pyrophosphatase from Salinispora tropica (strain ATCC BAA-916 / DSM 44818 / JCM 13857 / NBRC 105044 / CNB-440).